The following is a 101-amino-acid chain: Urease subunit beta (101 aa).

Belongs to the urease beta subunit family. As to quaternary structure, heterotrimer of UreA (gamma), UreB (beta) and UreC (alpha) subunits. Three heterotrimers associate to form the active enzyme.

It localises to the cytoplasm. The catalysed reaction is urea + 2 H2O + H(+) = hydrogencarbonate + 2 NH4(+). Its pathway is nitrogen metabolism; urea degradation; CO(2) and NH(3) from urea (urease route): step 1/1. This is Urease subunit beta from Burkholderia vietnamiensis (strain G4 / LMG 22486) (Burkholderia cepacia (strain R1808)).